Consider the following 151-residue polypeptide: Prefoldin subunit alpha (151 aa).

This sequence belongs to the prefoldin subunit alpha family. Heterohexamer of two alpha and four beta subunits.

It is found in the cytoplasm. Molecular chaperone capable of stabilizing a range of proteins. Seems to fulfill an ATP-independent, HSP70-like function in archaeal de novo protein folding. The polypeptide is Prefoldin subunit alpha (pfdA) (Aeropyrum pernix (strain ATCC 700893 / DSM 11879 / JCM 9820 / NBRC 100138 / K1)).